Consider the following 126-residue polypeptide: Large ribosomal subunit protein eL28 (126 aa).

An N-acetylserine modification is found at S2.

This sequence belongs to the eukaryotic ribosomal protein eL28 family.

This is Large ribosomal subunit protein eL28 (rpl-28) from Caenorhabditis elegans.